A 226-amino-acid chain; its full sequence is Uracil-DNA glycosylase (226 aa).

Asp65 serves as the catalytic Proton acceptor.

Belongs to the uracil-DNA glycosylase (UDG) superfamily. UNG family.

The protein localises to the cytoplasm. It catalyses the reaction Hydrolyzes single-stranded DNA or mismatched double-stranded DNA and polynucleotides, releasing free uracil.. Functionally, excises uracil residues from the DNA which can arise as a result of misincorporation of dUMP residues by DNA polymerase or due to deamination of cytosine. The polypeptide is Uracil-DNA glycosylase (Bacillus pumilus (strain SAFR-032)).